We begin with the raw amino-acid sequence, 298 residues long: MIKYYDRKTQTYQIEKVAGEKMIRWTYSSPVGMRLLETVVKKRMCSSFYGWYLDRPISRRKIHPFVCKFDLDLSIAEKNLKEFSSFNDFFYRKLKPSARSIDPCQDSLISLGDGKLLAYEDIDLDCLVQVKGLTYSLKELIKDPETASKYKRGTCLILRLCPTDYHRFHFIDSGICEPSHRIKGSYYSVNPVALQKVAKLFCENKREWSIFHSDHFGDILTIEVGATFVGSIIQSYTPHQPVARGDEKGYFKFGGSTVLLFFEENKIKIDPDIVEQTKLGYETYVLFGEKVGVRHKRR.

Active-site charge relay system; for autoendoproteolytic cleavage activity residues include Asp113, His169, and Ser256. The active-site Schiff-base intermediate with substrate; via pyruvic acid; for decarboxylase activity is the Ser256. Residue Ser256 is modified to Pyruvic acid (Ser); by autocatalysis.

It belongs to the phosphatidylserine decarboxylase family. PSD-B subfamily. Prokaryotic type II sub-subfamily. As to quaternary structure, heterodimer of a large membrane-associated beta subunit and a small pyruvoyl-containing alpha subunit. It depends on pyruvate as a cofactor. In terms of processing, is synthesized initially as an inactive proenzyme. Formation of the active enzyme involves a self-maturation process in which the active site pyruvoyl group is generated from an internal serine residue via an autocatalytic post-translational modification. Two non-identical subunits are generated from the proenzyme in this reaction, and the pyruvate is formed at the N-terminus of the alpha chain, which is derived from the carboxyl end of the proenzyme. The autoendoproteolytic cleavage occurs by a canonical serine protease mechanism, in which the side chain hydroxyl group of the serine supplies its oxygen atom to form the C-terminus of the beta chain, while the remainder of the serine residue undergoes an oxidative deamination to produce ammonia and the pyruvoyl prosthetic group on the alpha chain. During this reaction, the Ser that is part of the protease active site of the proenzyme becomes the pyruvoyl prosthetic group, which constitutes an essential element of the active site of the mature decarboxylase.

The protein resides in the cell membrane. It carries out the reaction a 1,2-diacyl-sn-glycero-3-phospho-L-serine + H(+) = a 1,2-diacyl-sn-glycero-3-phosphoethanolamine + CO2. It participates in phospholipid metabolism; phosphatidylethanolamine biosynthesis; phosphatidylethanolamine from CDP-diacylglycerol: step 2/2. Catalyzes the formation of phosphatidylethanolamine (PtdEtn) from phosphatidylserine (PtdSer). The sequence is that of Phosphatidylserine decarboxylase proenzyme from Desulfitobacterium hafniense (strain Y51).